We begin with the raw amino-acid sequence, 892 residues long: Putative leucine-rich repeat receptor-like serine/threonine-protein kinase At2g04300 (892 aa).

The N-terminal stretch at 1-26 (MKTHPQAILLCVLFFITFGLLHVVEA) is a signal peptide. The Extracellular segment spans residues 27–523 (GNQEGFISLD…GAKKKNVVVL (497 aa)). 5 N-linked (GlcNAc...) asparagine glycosylation sites follow: Asn-99, Asn-186, Asn-241, Asn-267, and Asn-294. 4 LRR repeats span residues 375 to 396 (IKNI…PCVP), 399 to 422 (FMWD…FLNL), 423 to 444 (SSSH…LQNL), and 447 to 467 (SNNN…SLLV). N-linked (GlcNAc...) asparagine glycans are attached at residues Asn-407, Asn-421, Asn-437, Asn-450, and Asn-469. Residues 524–544 (VVVSIALVVVLGSALALFLVF) form a helical membrane-spanning segment. Residues 545–892 (RKRKTPRNEV…FGTEYTPEAR (348 aa)) are Cytoplasmic-facing. Thr-573 is subject to Phosphothreonine. One can recognise a Protein kinase domain in the interval 582–855 (NNFEKILGKG…QVVIELNECL (274 aa)). ATP is bound by residues 588–596 (LGKGGFGMV) and Lys-610. Tyr-655 carries the phosphotyrosine modification. Asp-707 functions as the Proton acceptor in the catalytic mechanism. Phosphothreonine occurs at positions 742 and 747. Position 755 is a phosphotyrosine (Tyr-755).

It belongs to the protein kinase superfamily. Ser/Thr protein kinase family.

It localises to the cell membrane. It carries out the reaction L-seryl-[protein] + ATP = O-phospho-L-seryl-[protein] + ADP + H(+). The catalysed reaction is L-threonyl-[protein] + ATP = O-phospho-L-threonyl-[protein] + ADP + H(+). The polypeptide is Putative leucine-rich repeat receptor-like serine/threonine-protein kinase At2g04300 (Arabidopsis thaliana (Mouse-ear cress)).